The sequence spans 325 residues: 6-hydroxymellein 5-farnesyltransferase cdmH (325 aa).

Helical transmembrane passes span 60–80, 113–133, 138–158, 169–189, and 192–212; these read ASILRLAGLCTAHCVLLGAAG, AFTWMAFLYSTSVGMLKAMLG, WPFMVPLTAIILVYPLGKRPI, LLGIAVGYPTMYGWAAVYGPC, and ISEILHRCVPLWIFLFFWSFY. Residue asparagine 214 is glycosylated (N-linked (GlcNAc...) asparagine). 3 helical membrane-spanning segments follow: residues 243 to 263, 267 to 287, and 295 to 315; these read ALLAILASIALSTIPFVLRPF, WLWLSWVGAWVPGIIQQLLSF, and GGVLHLSTVKLGLWTVFACTL.

Belongs to the UbiA prenyltransferase family. It depends on Mg(2+) as a cofactor.

It localises to the membrane. It catalyses the reaction 6-hydroxymellein + (2E,6E)-farnesyl diphosphate = verruculide C + diphosphate. Its pathway is secondary metabolite biosynthesis; terpenoid biosynthesis. 6-hydroxymellein 5-farnesyltransferase; part of the gene cluster that mediates the biosynthesis of chrodrimanin B, a meroterpenoid that acts as a potent blocker of insect GABA-gated chloride channels. The first step of the pathway is the biosynthesis of 6-hydroxymellein by the polyketide synthase cdmE. The prenyltransferase cdmH acts as a 6-hydroxymellein 5-farnesyltransferase and produces the hydrophobic metabolite verruculide C. The FAD-dependent monooxygenase cdmI further converts verruculide C into verruculide B. The terpene cyclase cdmG then produced the pentacyclic molecule 3-hydroxypentacecilide A, the backbone structure of chrodrimanin B, via folding the farnesyl moiety of the substrate into the chair-boat conformation. The short-chain dehydrogenase/reductase cdmF functions as the 3-OH dehydrogenase that oxidizes the C-3 hydroxyl group of 3-hydroxypentacecilide A and produces chrodrimanin C, the dehydrogenated product of 3-hydroxypentacecilide A. The cytochrome P450 monooxygenase cdmJ then accepts both 3-hydroxypentacecilide A and chrodrimanin C and functions as a C-7-beta-hydroxylase to produce respectively chrodrimanin H and chrodrimanin F. The dioxygenase cdmA accepts chrodrimanin H to afford chrodrimanin E, which is further transformed to chrodrimanin A by the dioxygenase cdmD. CdmA can also accept chrodrimanin C as substrate to convert it into verruculide A, which is further converted into chrodrimanin T by cdmD. The last step of the biosynthesis is proposed to be performed by the acetyltransferase cdmC which acetylates chrodrimanin A to yield chrodrimanin B. The pathway may also lead to the production of additional shunt products, including chrodrimanins T and U. The polypeptide is 6-hydroxymellein 5-farnesyltransferase cdmH (Talaromyces verruculosus (Penicillium verruculosum)).